Consider the following 569-residue polypeptide: Glucose-6-phosphate isomerase, cytosolic 2 (569 aa).

Glutamate 360 acts as the Proton donor in catalysis. Residues histidine 391 and lysine 516 contribute to the active site.

This sequence belongs to the GPI family. As to quaternary structure, homodimer.

The protein resides in the cytoplasm. It catalyses the reaction alpha-D-glucose 6-phosphate = beta-D-fructose 6-phosphate. Its pathway is carbohydrate degradation; glycolysis; D-glyceraldehyde 3-phosphate and glycerone phosphate from D-glucose: step 2/4. This chain is Glucose-6-phosphate isomerase, cytosolic 2 (PGIC2), found in Clarkia concinna (Red ribbons).